The sequence spans 325 residues: Protein UL76 (325 aa).

Residues A222 to A286 are disordered. The segment covering G247–A258 has biased composition (low complexity).

The protein belongs to the herpesviridae UL24 family.

Its subcellular location is the virion. It localises to the host cytoplasm. The protein resides in the host nucleus. It is found in the host nucleolus. The protein localises to the host Golgi apparatus. Its function is as follows. May participate in nuclear egress of viral particles. Plays a role in the dispersal of several host nucleolar proteins including NCL/nucleolin and NPM1. Since deletion of host NCL/nucleolin negatively impact on nuclear egress, UL76 supposedly acts on this process through its effect on host nucleoli. Induces cell cycle arrest in host cells at the G2/M phase following by apoptosis. The mechanism involves the inhibition of host mitotic complex cyclinB/CDK1. This Human cytomegalovirus (strain Merlin) (HHV-5) protein is Protein UL76 (UL76).